The sequence spans 84 residues: ATP synthase subunit c (84 aa).

Helical transmembrane passes span methionine 1–glycine 21 and leucine 53–isoleucine 73.

The protein belongs to the ATPase C chain family. In terms of assembly, F-type ATPases have 2 components, F(1) - the catalytic core - and F(0) - the membrane proton channel. F(1) has five subunits: alpha(3), beta(3), gamma(1), delta(1), epsilon(1). F(0) has three main subunits: a(1), b(2) and c(10-14). The alpha and beta chains form an alternating ring which encloses part of the gamma chain. F(1) is attached to F(0) by a central stalk formed by the gamma and epsilon chains, while a peripheral stalk is formed by the delta and b chains.

It localises to the cell inner membrane. Its function is as follows. F(1)F(0) ATP synthase produces ATP from ADP in the presence of a proton or sodium gradient. F-type ATPases consist of two structural domains, F(1) containing the extramembraneous catalytic core and F(0) containing the membrane proton channel, linked together by a central stalk and a peripheral stalk. During catalysis, ATP synthesis in the catalytic domain of F(1) is coupled via a rotary mechanism of the central stalk subunits to proton translocation. In terms of biological role, key component of the F(0) channel; it plays a direct role in translocation across the membrane. A homomeric c-ring of between 10-14 subunits forms the central stalk rotor element with the F(1) delta and epsilon subunits. The protein is ATP synthase subunit c of Dictyoglomus thermophilum (strain ATCC 35947 / DSM 3960 / H-6-12).